The chain runs to 2003 residues: Neurogenic locus notch homolog protein 4 (2003 aa).

The N-terminal stretch at 1 to 23 (MQPPSLLLLLLLLLLLCVSVVRP) is a signal peptide. EGF-like domains lie at 24–63 (RGLLCGSFPEPCANGGTCLSLSLGQGTCQCAPGFLGETCQ), 64–115 (FPDP…ERCQ), 118–155 (LEDPCPPSFCSKRGRCHIQASGRPQCSCMPGWTGEQCQ), and 156–192 (LRDFCSANPCVNGGVCLATYPQIQCHCPPGFEGHACE). Residues 24–1447 (RGLLCGSFPE…TAPPANQLPW (1424 aa)) lie on the Extracellular side of the membrane. 48 cysteine pairs are disulfide-bonded: Cys-28-Cys-41, Cys-35-Cys-51, Cys-53-Cys-62, Cys-68-Cys-80, Cys-74-Cys-103, Cys-105-Cys-114, Cys-122-Cys-133, Cys-127-Cys-143, Cys-145-Cys-154, Cys-160-Cys-171, Cys-165-Cys-180, Cys-182-Cys-191, Cys-198-Cys-211, Cys-205-Cys-220, Cys-222-Cys-231, Cys-238-Cys-249, Cys-243-Cys-262, Cys-264-Cys-273, Cys-280-Cys-291, Cys-285-Cys-300, Cys-302-Cys-311, Cys-318-Cys-332, Cys-326-Cys-341, Cys-343-Cys-352, Cys-359-Cys-370, Cys-364-Cys-379, Cys-381-Cys-390, Cys-396-Cys-407, Cys-401-Cys-418, Cys-420-Cys-429, Cys-436-Cys-452, Cys-446-Cys-461, Cys-463-Cys-472, Cys-479-Cys-490, Cys-484-Cys-499, Cys-501-Cys-510, Cys-517-Cys-528, Cys-522-Cys-537, Cys-539-Cys-548, Cys-555-Cys-566, Cys-560-Cys-575, Cys-577-Cys-586, Cys-593-Cys-604, Cys-598-Cys-613, Cys-615-Cys-624, Cys-629-Cys-640, Cys-634-Cys-649, and Cys-651-Cys-658. One can recognise an EGF-like 5; calcium-binding domain in the interval 194-232 (DVNECFQDPGPCPKGTSCHNTLGSFQCLCPVGQEGPRCE). An EGF-like 6 domain is found at 234 to 274 (RAGPCPPRGCSNGGTCQLMPEKDSTFHLCLCPPGFIGPDCE). Positions 276–312 (NPDNCVSHQCQNGGTCQDGLDTYTCLCPETWTGWDCS) constitute an EGF-like 7; calcium-binding domain. The EGF-like 8; calcium-binding domain occupies 314-353 (DVDECETQGPPHCRNGGTCQNSAGSFHCVCVSGWGGTSCE). In terms of domain architecture, EGF-like 9; calcium-binding spans 355 to 391 (NLDDCIAATCAPGSTCIDRVGSFSCLCPPGRTGLLCH). Residues 392–430 (LEDMCLSQPCHGDAQCSTNPLTGSTLCLCQPGYSGPTCH) enclose the EGF-like 10 domain. Residues 432 to 473 (DLDECLMAQQGPSPCEHGGSCLNTPGSFNCLCPPGYTGSRCE) form the EGF-like 11; calcium-binding domain. The region spanning 475-511 (DHNECLSQPCHPGSTCLDLLATFHCLCPPGLEGQLCE) is the EGF-like 12; calcium-binding domain. The EGF-like 13; calcium-binding domain maps to 513-549 (ETNECASAPCLNHADCHDLLNGFQCICLPGFSGTRCE). Residues 551–587 (DIDECRSSPCANGGQCQDQPGAFHCKCLPGFEGPRCQ) enclose the EGF-like 14; calcium-binding domain. Positions 589-625 (EVDECLSDPCPVGASCLDLPGAFFCLCPSGFTGQLCE) constitute an EGF-like 15; calcium-binding domain. EGF-like domains are found at residues 626–659 (VPLCAPNLCQPKQICKDQKDKANCLCPDGSPGCA), 661–689 (PEDNCTCHHGHCQRSSCVCDVGWTGPECE), 691–727 (ELGGCISAPCAHGGTCYPQPSGYNCTCPTGYTGPTCS), 729–765 (EMTACHSGPCLNGGSCNPSPGGYYCTCPPSHTGPQCQ), 767–803 (STDYCVSAPCFNGGTCVNRPGTFSCLCAMGFQGPRCE), 806–842 (LRPSCADSPCRNRATCQDSPQGPRCLCPTGYTGGSCQ), 844–880 (LMDLCAQKPCPRNSHCLQTGPSFHCLCLQGWTGPLCN), 882–928 (PLSS…SLCQ), 930–966 (HVNPCESRPCQNGATCMAQPSGYLCQCAPGYDGQNCS), 968–1004 (ELDACQSQPCHNHGTCTPKPGGFHCACPPGFVGLRCE), 1006–1044 (DVDECLDQPCHPTGTAACHSLANAFYCQCLPGHTGQWCE), 1046–1085 (EIDPCHSQPCFHGGTCEATAGSPLGFICHCPKGFEGPTCS), 1087–1126 (RAPSCGFHHCHHGGLCLPSPKPGFPPRCACLSGYGGPDCL), and 1130–1171 (APKG…PRCQ). Residue Asn-664 is glycosylated (N-linked (GlcNAc...) asparagine). Disulfide bonds link Cys-665/Cys-672, Cys-667/Cys-677, Cys-679/Cys-688, Cys-695/Cys-706, Cys-700/Cys-715, Cys-717/Cys-726, Cys-733/Cys-744, Cys-738/Cys-753, Cys-755/Cys-764, Cys-771/Cys-782, Cys-776/Cys-791, Cys-793/Cys-802, Cys-810/Cys-821, Cys-815/Cys-830, Cys-832/Cys-841, Cys-848/Cys-859, Cys-853/Cys-868, Cys-870/Cys-879, Cys-886/Cys-907, Cys-901/Cys-916, Cys-918/Cys-927, Cys-934/Cys-945, Cys-939/Cys-954, Cys-956/Cys-965, Cys-972/Cys-983, Cys-977/Cys-992, Cys-994/Cys-1003, Cys-1010/Cys-1023, Cys-1015/Cys-1032, Cys-1034/Cys-1043, Cys-1050/Cys-1061, Cys-1055/Cys-1073, Cys-1075/Cys-1084, Cys-1091/Cys-1102, Cys-1096/Cys-1114, Cys-1116/Cys-1125, Cys-1134/Cys-1146, Cys-1140/Cys-1159, Cys-1161/Cys-1170, Cys-1178/Cys-1191, Cys-1187/Cys-1203, Cys-1214/Cys-1238, Cys-1220/Cys-1233, Cys-1229/Cys-1245, Cys-1251/Cys-1277, Cys-1259/Cys-1272, and Cys-1268/Cys-1284. Asn-714 is a glycosylation site (N-linked (GlcNAc...) asparagine). Asn-964 carries an N-linked (GlcNAc...) asparagine glycan. An N-linked (GlcNAc...) asparagine glycan is attached at Asn-1143. 3 LNR repeats span residues 1170–1213 (CQKP…PWKG), 1214–1250 (CPSHSRCWLLFRDGQCHPQCDSEECLFDGYDCETPPA), and 1251–1294 (CTPA…PEWG). The segment at 1347–1371 (AEEKLGGTRDPTYQERAAPQTQPLG) is disordered. Residues 1448-1468 (PVLCSPVAGVILLALGALLVL) form a helical membrane-spanning segment. The Cytoplasmic portion of the chain corresponds to 1469–2003 (QLIRRRRREH…PINQGGEGKK (535 aa)). A disordered region spans residues 1485 to 1508 (PGFTRRPRTQSAPHRRRPPLGEDS). Residues 1489–1502 (RRPRTQSAPHRRRP) show a composition bias toward basic residues. 5 ANK repeats span residues 1633–1665 (TGETPLHLAARFSRPTAARRLLEAGANPNQPDR), 1666–1698 (AGRTPLHAAVAADAREVCQLLLRSRQTAVDART), 1700–1732 (DGTTPLMLAARLAVEDLVEELIAAQADVGARDK), 1733–1765 (WGKTALHWAAAVNNARAARSLLQAGADKDAQDN), and 1766–1798 (REQTPLFLAAREGAVEVAQLLLGLGAARELRDQ). Disordered stretches follow at residues 1900-1927 (LSGVGAGGGPTPRGRRFSAGMRGPRPNP) and 1968-2003 (PPPCLTPSPERGSPQLDCGPPALQEMPINQGGEGKK).

This sequence belongs to the NOTCH family. Heterodimer of a C-terminal fragment N(TM) and a N-terminal fragment N(EC) which are probably linked by disulfide bonds. Interacts with MAML1, MAML2 and MAML3 which act as transcriptional coactivators for NOTCH4. In terms of assembly, (Microbial infection) Interacts with Epstein-Barr virus (EBV) RK-BARF0. In terms of processing, synthesized in the endoplasmic reticulum as an inactive form which is proteolytically cleaved by a furin-like convertase in the trans-Golgi network before it reaches the plasma membrane to yield an active, ligand-accessible form. Cleavage results in a C-terminal fragment N(TM) and a N-terminal fragment N(EC). Following ligand binding, it is cleaved by TNF-alpha converting enzyme (TACE) to yield a membrane-associated intermediate fragment called notch extracellular truncation (NEXT). This fragment is then cleaved by presenilin dependent gamma-secretase to release a notch-derived peptide containing the intracellular domain (NICD) from the membrane. Phosphorylated. As to expression, highly expressed in the heart, moderately in the lung and placenta and at low levels in the liver, skeletal muscle, kidney, pancreas, spleen, lymph node, thymus, bone marrow and fetal liver. No expression was seen in adult brain or peripheral blood leukocytes.

It is found in the cell membrane. It localises to the nucleus. Functionally, functions as a receptor for membrane-bound ligands Jagged1, Jagged2 and Delta1 to regulate cell-fate determination. Upon ligand activation through the released notch intracellular domain (NICD) it forms a transcriptional activator complex with RBPJ/RBPSUH and activates genes of the enhancer of split locus. Affects the implementation of differentiation, proliferation and apoptotic programs. May regulate branching morphogenesis in the developing vascular system. This chain is Neurogenic locus notch homolog protein 4, found in Homo sapiens (Human).